A 175-amino-acid polypeptide reads, in one-letter code: Large ribosomal subunit protein uL10 (175 aa).

The protein belongs to the universal ribosomal protein uL10 family. In terms of assembly, part of the ribosomal stalk of the 50S ribosomal subunit. The N-terminus interacts with L11 and the large rRNA to form the base of the stalk. The C-terminus forms an elongated spine to which L12 dimers bind in a sequential fashion forming a multimeric L10(L12)X complex.

Functionally, forms part of the ribosomal stalk, playing a central role in the interaction of the ribosome with GTP-bound translation factors. The polypeptide is Large ribosomal subunit protein uL10 (Thermobifida fusca (strain YX)).